Reading from the N-terminus, the 233-residue chain is tRNA (guanine-N(1)-)-methyltransferase (233 aa).

Residues Gly113 and 133 to 138 (IGDYVL) contribute to the S-adenosyl-L-methionine site.

This sequence belongs to the RNA methyltransferase TrmD family. As to quaternary structure, homodimer.

It is found in the cytoplasm. The enzyme catalyses guanosine(37) in tRNA + S-adenosyl-L-methionine = N(1)-methylguanosine(37) in tRNA + S-adenosyl-L-homocysteine + H(+). Specifically methylates guanosine-37 in various tRNAs. This Ruminiclostridium cellulolyticum (strain ATCC 35319 / DSM 5812 / JCM 6584 / H10) (Clostridium cellulolyticum) protein is tRNA (guanine-N(1)-)-methyltransferase.